An 84-amino-acid polypeptide reads, in one-letter code: MKAIIFFIGCLMLIDLVAGSRSGYPVTQKGCVYSCFWGSNWWCNAECTALGGSSGYCAWPSCWCYSLPDNRNIWGSYPNNCGKK.

A signal peptide spans 1-19 (MKAIIFFIGCLMLIDLVAG). Residues 21-82 (RSGYPVTQKG…IWGSYPNNCG (62 aa)) enclose the LCN-type CS-alpha/beta domain. 4 disulfide bridges follow: Cys31/Cys81, Cys35/Cys57, Cys43/Cys62, and Cys47/Cys64. Cysteine amide is present on Cys81.

Expressed by the venom gland.

The protein resides in the secreted. Its function is as follows. Beta toxins bind voltage-independently at site-4 of sodium channels (Nav) and shift the voltage of activation toward more negative potentials thereby affecting sodium channel activation and promoting spontaneous and repetitive firing. This chain is Toxin To5, found in Tityus obscurus (Amazonian scorpion).